We begin with the raw amino-acid sequence, 443 residues long: Acid phosphatase type 7 (443 aa).

Residues 1–23 (MAAAPPPPPPLLLLLLCVCAVFA) form the signal peptide. Asn53, Asn76, and Asn126 each carry an N-linked (GlcNAc...) asparagine glycan. Fe cation-binding residues include Asp140, Asp169, and Tyr172. Zn(2+) is bound at residue Asp169. Asn204 contributes to the Zn(2+) binding site. Asn210 carries an N-linked (GlcNAc...) asparagine glycan. Zn(2+) is bound at residue His288. N-linked (GlcNAc...) asparagine glycosylation is present at Asn313. His338 serves as a coordination point for Zn(2+). His340 contacts Fe cation. Asn355 and Asn409 each carry an N-linked (GlcNAc...) asparagine glycan.

This sequence belongs to the metallophosphoesterase superfamily. Purple acid phosphatase family. Requires Fe cation as cofactor. It depends on Zn(2+) as a cofactor.

It localises to the secreted. The enzyme catalyses a phosphate monoester + H2O = an alcohol + phosphate. This is Acid phosphatase type 7 from Danio rerio (Zebrafish).